Here is a 555-residue protein sequence, read N- to C-terminus: MPIAGTKYAPFPAPQLDDRTWPSKRIEKAPIWCSVDLRDGNQALIDPMGHDRKERMFRLLIDMGFPEIEIGFPSASQTDFDFCRWAIEQGDVPDDVDLQVLVQCRPELITRTFEALEGAKTPIIHFYNSTSELQRRVVFAKDVGGIKQIATDAAKMIMDMAAKAGGGYRFQYSPESFTGTELDVALEICNAVIEIVKPTPDNKLIVNLPSTVEMNTPNVYADQIEWMCRNLDNRESLIISLHPHNDRGTGIAATELGLMAGADRGEGTLFGNGERTGNVDVVTLALNMYTQGIDPGLDCTDINRMKEVYEYSNQLKIAERHPYVGELVYTAFSGSHQDAINKGMKARRSANSPVWEVPYLPIDPQDVGRSYEAIIRINSQSGKGGIAYILQADYGLNLPRNLQVEFREIIQHITDEEGKELPSKRIYEEFQKLYVTQPDARIKFVDHHTYPHPEQKGRRILTAEITDNGVTKTIEGKGTGPIDGFVDALSKYLGVKMSVVDYSEHSLQQGSDASAISYVEMVYPGGKLFGVGINDNIVSASLEAVVSAANRVIAK.

The 274-residue stretch at 30 to 303 folds into the Pyruvate carboxyltransferase domain; that stretch reads PIWCSVDLRD…DPGLDCTDIN (274 aa). Mg(2+)-binding residues include Asp-39, His-242, His-244, and Asn-278. The segment at 437–555 is regulatory domain; that stretch reads QPDARIKFVD…VSAANRVIAK (119 aa).

It belongs to the alpha-IPM synthase/homocitrate synthase family. LeuA type 2 subfamily. In terms of assembly, homodimer. Mg(2+) serves as cofactor.

It localises to the cytoplasm. The enzyme catalyses 3-methyl-2-oxobutanoate + acetyl-CoA + H2O = (2S)-2-isopropylmalate + CoA + H(+). It participates in amino-acid biosynthesis; L-leucine biosynthesis; L-leucine from 3-methyl-2-oxobutanoate: step 1/4. Its function is as follows. Catalyzes the condensation of the acetyl group of acetyl-CoA with 3-methyl-2-oxobutanoate (2-ketoisovalerate) to form 3-carboxy-3-hydroxy-4-methylpentanoate (2-isopropylmalate). In Brucella melitensis biotype 1 (strain ATCC 23456 / CCUG 17765 / NCTC 10094 / 16M), this protein is 2-isopropylmalate synthase.